The primary structure comprises 1086 residues: Transcription initiation factor TFIID subunit 2 (1086 aa).

Positions 1–11 (MDFSEASTSGD) are enriched in polar residues. Disordered regions lie at residues 1 to 53 (MDFS…PPPV) and 1064 to 1086 (GYEA…NLMQ). 2 stretches are compositionally biased toward pro residues: residues 19–36 (PFPP…PPLA) and 44–53 (APPPLQPPPV). Positions 1067-1078 (AARRSPPRRDFG) are enriched in basic and acidic residues.

It belongs to the TAF2 family. As to quaternary structure, component of the TFIID basal transcription factor complex, composed of TATA-box-binding protein tbp-1, and a number of TBP-associated factors (TAFs).

The protein resides in the nucleus. Its function is as follows. The TFIID basal transcription factor complex plays a major role in the initiation of RNA polymerase II (Pol II)-dependent transcription. TFIID recognizes and binds promoters via its subunit tbp-1, a TATA-box-binding protein, and promotes assembly of the pre-initiation complex (PIC). The TFIID complex consists of tbp-1 and TBP-associated factors (TAFs), including taf-2. May regulate RNA polymerase II activity and thereby may control transcription initiation by RNA polymerase II. This is Transcription initiation factor TFIID subunit 2 from Caenorhabditis elegans.